Consider the following 100-residue polypeptide: NADH-quinone oxidoreductase subunit K (100 aa).

3 helical membrane passes run 4–24 (LNYGFTISIILFFIGIISLLI), 29–49 (IFILVSLEVLINSIILGFILI), and 60–80 (VLYIFIVTIATVEVSVMLAIF).

Belongs to the complex I subunit 4L family. NDH-1 is composed of 13 different subunits. Subunits NuoA, H, J, K, L, M, N constitute the membrane sector of the complex.

The protein localises to the cell membrane. The catalysed reaction is a quinone + NADH + 5 H(+)(in) = a quinol + NAD(+) + 4 H(+)(out). NDH-1 shuttles electrons from NADH, via FMN and iron-sulfur (Fe-S) centers, to quinones in the respiratory chain. The immediate electron acceptor for the enzyme in this species is believed to be ubiquinone. Couples the redox reaction to proton translocation (for every two electrons transferred, four hydrogen ions are translocated across the cytoplasmic membrane), and thus conserves the redox energy in a proton gradient. The chain is NADH-quinone oxidoreductase subunit K from Buchnera aphidicola subsp. Cinara cedri (strain Cc).